We begin with the raw amino-acid sequence, 587 residues long: MKREHHHLHPRPDPPSMAAAPNGDTYLNTGKAKLWEEDAQLDGGMDELLAVLGYKVKSSDMAEVAQKLEQLEEAMCQVQDTGLSHLAFDTVHYNPSDLSTWLESMITELHPPPSFPQPHPSQMNDSSFLAPAESSTITSIDYDPQRQTSSLIFEESSSSDYDLKAITSSAIYSPRENKRLKPSSESDSDLFSTSAIGASNSATRPIVLVDSQENGIQLVHALMACAEAVQQNNLNLAEALEKRIGYLAVSQAGAMRKVATFFAEALARRIYRVCPENPLDHSMSDMLQLHFYESSPYLKFAHFTANQAILEAFEGKKRVHVIDFSMNQGMQWPALLQALALRPSGPPAFRLTGIGPPAPDNSDYLQDVGWKLAKLVETINVEFEYRGFVANSLADLDASMLELRPSEVESVVVNSVFELHKLLARPGAIEKVMSVVKQMKPEIMTVVEQEANHNGPVFMDRFTESLHYYSTLFDSLESSPNNQDKMMSEMYLGKQICNVVACEGSDRVEWHETLTQWRTRLCSSGFEPIHLGSNAFKQASMLLALFGSGEGYRVEENNGSLTLGWHTRPLIVTSAWKLGNNSVVVTH.

The interval 1–23 is disordered; sequence MKREHHHLHPRPDPPSMAAAPNG. The DELLA motif motif lies at 46 to 50; it reads DELLA. The GRAS domain occupies 209 to 577; it reads VDSQENGIQL…RPLIVTSAWK (369 aa). Residues 216–270 form a leucine repeat I (LRI) region; the sequence is IQLVHALMACAEAVQQNNLNLAEALEKRIGYLAVSQAGAMRKVATFFAEALARRI. The VHIID stretch occupies residues 288-353; that stretch reads QLHFYESSPY…SGPPAFRLTG (66 aa). Residues 319–323 carry the VHIID motif; the sequence is VHVID. Residues 367–399 are leucine repeat II (LRII); that stretch reads DVGWKLAKLVETINVEFEYRGFVANSLADLDAS. Residues 411-498 form a PFYRE region; it reads VVVNSVFELH…EMYLGKQICN (88 aa). Residues 419-423 carry the LXXLL motif motif; it reads LHKLL. Residues 501–577 form an SAW region; the sequence is ACEGSDRVEW…RPLIVTSAWK (77 aa).

It belongs to the GRAS family. DELLA subfamily. In terms of processing, phosphorylated. Ubiquitinated. Upon GA application it is ubiquitinated, leading to its subsequent degradation.

Its subcellular location is the nucleus. Functionally, probable transcriptional regulator that acts as a repressor of the gibberellin (GA) signaling pathway. Probably acts by participating in large multiprotein complexes that represses transcription of GA-inducible genes. Upon GA application, it is degraded by the proteasome, allowing the GA signaling pathway. In Cucurbita maxima (Pumpkin), this protein is DELLA protein GAIP-B (GAIPB).